The chain runs to 343 residues: Ribosomal RNA small subunit methyltransferase C (343 aa).

This sequence belongs to the methyltransferase superfamily. RsmC family. As to quaternary structure, monomer.

Its subcellular location is the cytoplasm. It catalyses the reaction guanosine(1207) in 16S rRNA + S-adenosyl-L-methionine = N(2)-methylguanosine(1207) in 16S rRNA + S-adenosyl-L-homocysteine + H(+). In terms of biological role, specifically methylates the guanine in position 1207 of 16S rRNA in the 30S particle. This chain is Ribosomal RNA small subunit methyltransferase C, found in Shigella sonnei (strain Ss046).